We begin with the raw amino-acid sequence, 380 residues long: Putative 8-amino-7-oxononanoate synthase (380 aa).

Position 18 (Arg18) interacts with substrate. Residue 106-107 coordinates pyridoxal 5'-phosphate; the sequence is GY. His131 is a substrate binding site. Pyridoxal 5'-phosphate is bound by residues Ser179, 205 to 208, and 236 to 239; these read DEAH and TFGK. Lys239 bears the N6-(pyridoxal phosphate)lysine mark. Thr352 serves as a coordination point for substrate.

The protein belongs to the class-II pyridoxal-phosphate-dependent aminotransferase family. BioF subfamily. In terms of assembly, homodimer. Pyridoxal 5'-phosphate is required as a cofactor.

It carries out the reaction 6-carboxyhexanoyl-[ACP] + L-alanine + H(+) = (8S)-8-amino-7-oxononanoate + holo-[ACP] + CO2. Its pathway is cofactor biosynthesis; biotin biosynthesis. Functionally, catalyzes the decarboxylative condensation of pimeloyl-[acyl-carrier protein] and L-alanine to produce 8-amino-7-oxononanoate (AON), [acyl-carrier protein], and carbon dioxide. The polypeptide is Putative 8-amino-7-oxononanoate synthase (bioF) (Neisseria meningitidis serogroup B (strain ATCC BAA-335 / MC58)).